The primary structure comprises 379 residues: SUN domain-containing protein 5 (379 aa).

Residues 1 to 45 are disordered; the sequence is MPRSSRSPGDPGALLEDVAHNPRPRRIAQRGRNTSRMAEDTSPNM. Residues 1–105 lie on the Nuclear side of the membrane; the sequence is MPRSSRSPGD…LLCQKLMEKT (105 aa). Polar residues predominate over residues 31-45; it reads GRNTSRMAEDTSPNM. Residues 106 to 122 traverse the membrane as a helical segment; it reads GILLLCAFGFWMFSIHL. Over 123 to 379 the chain is Perinuclear space; that stretch reads PSKMKVWQDD…PHQNPYPKRD (257 aa). Residues 141-182 are a coiled coil; that stretch reads LRLYQEKVRHHSGEIQDLRGSMNQLIAKLQEMEAMSDEQKMA. The 160-residue stretch at 205–364 folds into the SUN domain; it reads GASIDFEHTS…YRVRVHGSVA (160 aa).

As to quaternary structure, probable homotrimer. Interacts with DNAJB13. In terms of processing, highly glycosylated in the Golgi apparatus during spermiogenesis. In terms of tissue distribution, sperm (at protein level). Widely expressed. Conflictingly shown to be specifically expressed in testis.

The protein localises to the nucleus inner membrane. Its subcellular location is the golgi apparatus. Plays an essential role in anchoring sperm head to the tail. Is responsible for the attachment of the coupling apparatus to the sperm nuclear envelope. This chain is SUN domain-containing protein 5 (SUN5), found in Homo sapiens (Human).